The sequence spans 80 residues: DNA-directed RNA polymerase RPB10 homolog (80 aa).

Cys7, Cys10, Cys65, and Cys66 together coordinate Zn(2+).

Belongs to the archaeal RpoN/eukaryotic RPB10 RNA polymerase subunit family. In terms of assembly, part of the viral DNA-directed RNA polymerase that consists of 8 polII-like subunits (RPB1, RPB2, RPB3, RPB5, RPB6, RPB7, RPB9, RPB10), a capping enzyme and a termination factor.

The protein localises to the host cytoplasm. Its function is as follows. Component of the DNA-directed RNA polymerase (RNAP) that catalyzes the transcription in the cytoplasm of viral DNA into RNA using the four ribonucleoside triphosphates as substrates. The protein is DNA-directed RNA polymerase RPB10 homolog of African swine fever virus (strain Badajoz 1971 Vero-adapted) (Ba71V).